A 340-amino-acid chain; its full sequence is Fructose-1,6-bisphosphatase class 1 (340 aa).

The Mg(2+) site is built by E107, D126, L128, and D129. N215 contacts substrate. Position 287 (E287) interacts with Mg(2+).

It belongs to the FBPase class 1 family. As to quaternary structure, homotetramer. Mg(2+) is required as a cofactor.

The protein resides in the cytoplasm. It catalyses the reaction beta-D-fructose 1,6-bisphosphate + H2O = beta-D-fructose 6-phosphate + phosphate. Its pathway is carbohydrate biosynthesis; gluconeogenesis. The sequence is that of Fructose-1,6-bisphosphatase class 1 from Brucella suis (strain ATCC 23445 / NCTC 10510).